Reading from the N-terminus, the 78-residue chain is Omega-conotoxin-like 12 (78 aa).

An N-terminal signal peptide occupies residues 1–22 (MKLTCVVIVAVLLLTACQLITA). The propeptide occupies 23–42 (DDSRGTQKHRSLRSTTKVSK). Intrachain disulfides connect Cys46-Cys62, Cys53-Cys65, and Cys61-Cys72.

This sequence belongs to the conotoxin O1 superfamily. Expressed by the venom duct.

Its subcellular location is the secreted. Functionally, omega-conotoxins act at presynaptic membranes, they bind and block voltage-gated calcium channels (Cav). This Conus striatus (Striated cone) protein is Omega-conotoxin-like 12.